The primary structure comprises 392 residues: Formate-dependent phosphoribosylglycinamide formyltransferase (392 aa).

N(1)-(5-phospho-beta-D-ribosyl)glycinamide is bound by residues 20 to 21 and Glu80; that span reads EL. ATP-binding positions include Arg112, Lys153, 158–163, 193–196, and Glu201; these read SSGKGQ and EGFV. The ATP-grasp domain maps to 117-306; that stretch reads RLAAEELGLP…EFALHVRAIL (190 aa). 2 residues coordinate Mg(2+): Glu265 and Glu277. N(1)-(5-phospho-beta-D-ribosyl)glycinamide-binding positions include Asp284, Lys355, and 362–363; that span reads RR.

Belongs to the PurK/PurT family. As to quaternary structure, homodimer.

It catalyses the reaction N(1)-(5-phospho-beta-D-ribosyl)glycinamide + formate + ATP = N(2)-formyl-N(1)-(5-phospho-beta-D-ribosyl)glycinamide + ADP + phosphate + H(+). It functions in the pathway purine metabolism; IMP biosynthesis via de novo pathway; N(2)-formyl-N(1)-(5-phospho-D-ribosyl)glycinamide from N(1)-(5-phospho-D-ribosyl)glycinamide (formate route): step 1/1. Its function is as follows. Involved in the de novo purine biosynthesis. Catalyzes the transfer of formate to 5-phospho-ribosyl-glycinamide (GAR), producing 5-phospho-ribosyl-N-formylglycinamide (FGAR). Formate is provided by PurU via hydrolysis of 10-formyl-tetrahydrofolate. This chain is Formate-dependent phosphoribosylglycinamide formyltransferase, found in Aeromonas salmonicida (strain A449).